The following is a 250-amino-acid chain: 5'-nucleotidase SurE (250 aa).

A divalent metal cation contacts are provided by Asp-8, Asp-9, Ser-40, and Asn-92.

Belongs to the SurE nucleotidase family. A divalent metal cation serves as cofactor.

The protein resides in the cytoplasm. It catalyses the reaction a ribonucleoside 5'-phosphate + H2O = a ribonucleoside + phosphate. Nucleotidase that shows phosphatase activity on nucleoside 5'-monophosphates. The protein is 5'-nucleotidase SurE of Dichelobacter nodosus (strain VCS1703A).